We begin with the raw amino-acid sequence, 1013 residues long: GPI ethanolamine phosphate transferase 3 (1013 aa).

The chain crosses the membrane as a helical span at residues 41–61 (TLYIFLYSALAALQFIAIAFF). N-linked (GlcNAc...) asparagine glycans are attached at residues Asn-184, Asn-205, Asn-336, Asn-399, and Asn-423. A run of 3 helical transmembrane segments spans residues 447–467 (YYSI…LITI), 484–504 (VPTI…VFYV), and 515–535 (LWAS…VPIF). Asn-539 is a glycosylation site (N-linked (GlcNAc...) asparagine). Transmembrane regions (helical) follow at residues 558 to 578 (VAAF…FTIW), 582 to 602 (IVSF…VFLP), 643 to 663 (IVGG…SLIT), and 682 to 702 (NYSF…PACI). A glycan (N-linked (GlcNAc...) asparagine) is linked at Asn-707. A helical membrane pass occupies residues 715-735 (AAPIWIGMLMKSILFVNFIYW). 3 N-linked (GlcNAc...) asparagine glycosylation sites follow: Asn-742, Asn-750, and Asn-755. The next 7 helical transmembrane spans lie at 761–781 (IVVG…PLCI), 802–822 (NAYG…ILLF), 825–845 (PLAQ…LEIF), 868–888 (FFST…GFIL), 899–919 (LGIV…VALL), 943–963 (GMLL…VTNF), and 977–997 (FMFA…ITIA).

The protein belongs to the PIGG/PIGN/PIGO family. PIGO subfamily.

Its subcellular location is the endoplasmic reticulum membrane. The protein operates within glycolipid biosynthesis; glycosylphosphatidylinositol-anchor biosynthesis. Involved in glycosylphosphatidylinositol-anchor biosynthesis. Transfers ethanolamine phosphate to the GPI third mannose which links the GPI-anchor to the C-terminus of the proteins by an amide bond. Involved in cell wall biosynthesis. This is GPI ethanolamine phosphate transferase 3 (GPI13) from Eremothecium gossypii (strain ATCC 10895 / CBS 109.51 / FGSC 9923 / NRRL Y-1056) (Yeast).